Reading from the N-terminus, the 699-residue chain is DNA ligase (699 aa).

The segment at 1–20 (MTVQKPIESLSPAQAKREHR) is disordered. NAD(+)-binding positions include 43–47 (DAEYD), 92–93 (SL), and Glu-126. The active-site N6-AMP-lysine intermediate is the Lys-128. Positions 149, 185, 301, and 325 each coordinate NAD(+). Cys-419, Cys-422, Cys-443, and Cys-449 together coordinate Zn(2+). The BRCT domain maps to 621 to 699 (AKESPVAGKT…EEDWLKLVGE (79 aa)).

This sequence belongs to the NAD-dependent DNA ligase family. LigA subfamily. Mg(2+) is required as a cofactor. Mn(2+) serves as cofactor.

It catalyses the reaction NAD(+) + (deoxyribonucleotide)n-3'-hydroxyl + 5'-phospho-(deoxyribonucleotide)m = (deoxyribonucleotide)n+m + AMP + beta-nicotinamide D-nucleotide.. DNA ligase that catalyzes the formation of phosphodiester linkages between 5'-phosphoryl and 3'-hydroxyl groups in double-stranded DNA using NAD as a coenzyme and as the energy source for the reaction. It is essential for DNA replication and repair of damaged DNA. This Beijerinckia indica subsp. indica (strain ATCC 9039 / DSM 1715 / NCIMB 8712) protein is DNA ligase.